A 321-amino-acid chain; its full sequence is Zinc finger protein 524 (321 aa).

2 stretches are compositionally biased toward polar residues: residues 1–14 and 39–48; these read MDNPSSDPLPSTLS and ATTSNRTLKS. Disordered stretches follow at residues 1–80 and 86–105; these read MDNP…DLLL and VPYTVPEGSAADGPQGSGSK. Positions 49–59 form a DNA-binding region, a.T hook; sequence SLPRKRGRPPR. 4 C2H2-type zinc fingers span residues 109-131, 137-159, 165-187, and 193-216; these read HFCPVCLRAFPYLSDLERHSISH, HVCKDCGKTFKRSSHLRRHCNIH, FRCVLCPRRFREAGELAHHHRIH, and YQCPSCRVRFTEANTLRRHYKRKH. The disordered stretch occupies residues 248-321; it reads GVQEESPEGK…PGAIGHPPVD (74 aa). Residues 262-271 are compositionally biased toward polar residues; that stretch reads PISSTTSPLS. A compositionally biased stretch (gly residues) spans 274–285; it reads TAGGSAGAGRGQ.

It belongs to the krueppel C2H2-type zinc-finger protein family.

Its subcellular location is the nucleus. Functionally, may be involved in transcriptional regulation. This chain is Zinc finger protein 524 (Znf524), found in Mus musculus (Mouse).